A 776-amino-acid polypeptide reads, in one-letter code: Endonuclease MutS2 (776 aa).

ATP is bound at residue 328–335; sequence GPNTGGKT. A Smr domain is found at 701 to 776; that stretch reads LDLRGKRYEE…GSGATIVTFK (76 aa).

This sequence belongs to the DNA mismatch repair MutS family. MutS2 subfamily. As to quaternary structure, homodimer. Binds to stalled ribosomes, contacting rRNA.

Functionally, endonuclease that is involved in the suppression of homologous recombination and thus may have a key role in the control of bacterial genetic diversity. Acts as a ribosome collision sensor, splitting the ribosome into its 2 subunits. Detects stalled/collided 70S ribosomes which it binds and splits by an ATP-hydrolysis driven conformational change. Acts upstream of the ribosome quality control system (RQC), a ribosome-associated complex that mediates the extraction of incompletely synthesized nascent chains from stalled ribosomes and their subsequent degradation. Probably generates substrates for RQC. The polypeptide is Endonuclease MutS2 (Streptococcus mutans serotype c (strain ATCC 700610 / UA159)).